Reading from the N-terminus, the 1020-residue chain is Retinoblastoma-related protein (1020 aa).

Composition is skewed to polar residues over residues 382-391 (SPTKTITSPL) and 398-409 (ASHTNGILGSTN). The interval 382 to 409 (SPTKTITSPLSPHRSPASHTNGILGSTN) is disordered. Residues 415 to 616 (TPVSTAMTTA…EKGSSMYNSL (202 aa)) are domain A. The tract at residues 415–869 (TPVSTAMTTA…NEIFIPAAKP (455 aa)) is pocket. The interval 617–737 (TVARPSLSAE…PGGGGETCAE (121 aa)) is spacer. The segment at 738–869 (TGINIFFSKI…NEIFIPAAKP (132 aa)) is domain B.

Belongs to the retinoblastoma protein (RB) family.

Its subcellular location is the nucleus. Regulator of biological processes that recruits a histone deacetylase to control gene transcription. May play a role in the entry into mitosis, negatively regulating the cell proliferation. Formation of stable complexes with geminiviridae replication-associated proteins may create a cellular environment which favors viral DNA replication. The protein is Retinoblastoma-related protein (RBR) of Ricinus communis (Castor bean).